Consider the following 256-residue polypeptide: Pimeloyl-[acyl-carrier protein] methyl ester esterase (256 aa).

Positions 15–242 constitute an AB hydrolase-1 domain; the sequence is HLVLLHGWGL…AAHAPFISHP (228 aa). Substrate is bound by residues tryptophan 22, 82–83, and 143–147; these read SL and FLALQ. Residue serine 82 is the Nucleophile of the active site. Residues aspartate 207 and histidine 235 contribute to the active site. Histidine 235 is a binding site for substrate.

This sequence belongs to the AB hydrolase superfamily. Carboxylesterase BioH family. In terms of assembly, monomer.

It localises to the cytoplasm. It carries out the reaction 6-carboxyhexanoyl-[ACP] methyl ester + H2O = 6-carboxyhexanoyl-[ACP] + methanol + H(+). Its pathway is cofactor biosynthesis; biotin biosynthesis. Its function is as follows. The physiological role of BioH is to remove the methyl group introduced by BioC when the pimeloyl moiety is complete. It allows to synthesize pimeloyl-ACP via the fatty acid synthetic pathway through the hydrolysis of the ester bonds of pimeloyl-ACP esters. The protein is Pimeloyl-[acyl-carrier protein] methyl ester esterase of Escherichia coli (strain K12 / MC4100 / BW2952).